The following is a 318-amino-acid chain: NADH-ubiquinone oxidoreductase chain 1 (318 aa).

8 helical membrane passes run 2 to 22 (FMIN…FLTL), 68 to 88 (ISMF…MWIP), 100 to 120 (LGVL…LWSG), 147 to 167 (AIIL…TLII), 172 to 192 (VWLI…TLAE), 217 to 237 (AGPF…MNIF), 253 to 273 (ELYT…FLWI), and 294 to 314 (LPLT…LSSI).

The protein belongs to the complex I subunit 1 family.

The protein resides in the mitochondrion inner membrane. The catalysed reaction is a ubiquinone + NADH + 5 H(+)(in) = a ubiquinol + NAD(+) + 4 H(+)(out). Its function is as follows. Core subunit of the mitochondrial membrane respiratory chain NADH dehydrogenase (Complex I) that is believed to belong to the minimal assembly required for catalysis. Complex I functions in the transfer of electrons from NADH to the respiratory chain. The immediate electron acceptor for the enzyme is believed to be ubiquinone. The protein is NADH-ubiquinone oxidoreductase chain 1 (MT-ND1) of Ovis aries (Sheep).